The chain runs to 132 residues: MEKQSYYGLGRRKSSSAKVYLTPTQDKGKITVNRRDPSEYFPNKLVIQDMEQPLDLTDLKKNFDINVVVKGGGFTGQAGAIRLGIVRALLQFNPELKKILKSKKLTTRDKRVKERKKFGLYGARRAPQFTKR.

Belongs to the universal ribosomal protein uS9 family.

The chain is Small ribosomal subunit protein uS9 (rpsI) from Mycoplasma pneumoniae (strain ATCC 29342 / M129 / Subtype 1) (Mycoplasmoides pneumoniae).